A 102-amino-acid polypeptide reads, in one-letter code: Large ribosomal subunit protein bL21 (102 aa).

The protein belongs to the bacterial ribosomal protein bL21 family. As to quaternary structure, part of the 50S ribosomal subunit. Contacts protein L20.

Its function is as follows. This protein binds to 23S rRNA in the presence of protein L20. This chain is Large ribosomal subunit protein bL21, found in Sorangium cellulosum (strain So ce56) (Polyangium cellulosum (strain So ce56)).